The sequence spans 169 residues: Lipoprotein signal peptidase (169 aa).

A run of 4 helical transmembrane segments spans residues W15–N35, I47–S67, W75–L95, and A107–V127. Active-site residues include D128 and D146. The chain crosses the membrane as a helical span at residues A141–F161.

The protein belongs to the peptidase A8 family.

The protein resides in the cell inner membrane. The enzyme catalyses Release of signal peptides from bacterial membrane prolipoproteins. Hydrolyzes -Xaa-Yaa-Zaa-|-(S,diacylglyceryl)Cys-, in which Xaa is hydrophobic (preferably Leu), and Yaa (Ala or Ser) and Zaa (Gly or Ala) have small, neutral side chains.. The protein operates within protein modification; lipoprotein biosynthesis (signal peptide cleavage). In terms of biological role, this protein specifically catalyzes the removal of signal peptides from prolipoproteins. This Vibrio parahaemolyticus serotype O3:K6 (strain RIMD 2210633) protein is Lipoprotein signal peptidase.